A 179-amino-acid polypeptide reads, in one-letter code: Small ribosomal subunit protein uS7 (179 aa).

Belongs to the universal ribosomal protein uS7 family. Part of the 30S ribosomal subunit. Contacts proteins S9 and S11.

In terms of biological role, one of the primary rRNA binding proteins, it binds directly to 16S rRNA where it nucleates assembly of the head domain of the 30S subunit. Is located at the subunit interface close to the decoding center, probably blocks exit of the E-site tRNA. This chain is Small ribosomal subunit protein uS7, found in Shigella flexneri serotype 5b (strain 8401).